We begin with the raw amino-acid sequence, 286 residues long: Shikimate dehydrogenase (NADP(+)) (286 aa).

Residues S22–S24 and T71 each bind shikimate. The active-site Proton acceptor is K75. E87 is a binding site for NADP(+). 2 residues coordinate shikimate: N96 and D111. Residues G136–A140, N160–R165, and I225 each bind NADP(+). Residue Y227 coordinates shikimate. G248 serves as a coordination point for NADP(+).

The protein belongs to the shikimate dehydrogenase family. In terms of assembly, homodimer.

The enzyme catalyses shikimate + NADP(+) = 3-dehydroshikimate + NADPH + H(+). The protein operates within metabolic intermediate biosynthesis; chorismate biosynthesis; chorismate from D-erythrose 4-phosphate and phosphoenolpyruvate: step 4/7. In terms of biological role, involved in the biosynthesis of the chorismate, which leads to the biosynthesis of aromatic amino acids. Catalyzes the reversible NADPH linked reduction of 3-dehydroshikimate (DHSA) to yield shikimate (SA). The sequence is that of Shikimate dehydrogenase (NADP(+)) from Rhizobium rhizogenes (strain K84 / ATCC BAA-868) (Agrobacterium radiobacter).